A 328-amino-acid chain; its full sequence is 3-dehydroquinate synthase (328 aa).

The protein belongs to the archaeal-type DHQ synthase family.

It carries out the reaction 2-amino-2,3,7-trideoxy-D-lyxo-hept-6-ulosonate + NAD(+) + H2O = 3-dehydroquinate + NH4(+) + NADH + H(+). Functionally, catalyzes the oxidative deamination and cyclization of 2-amino-3,7-dideoxy-D-threo-hept-6-ulosonic acid (ADH) to yield 3-dehydroquinate (DHQ), which is fed into the canonical shikimic pathway of aromatic amino acid biosynthesis. This is 3-dehydroquinate synthase from Methanoculleus marisnigri (strain ATCC 35101 / DSM 1498 / JR1).